A 753-amino-acid polypeptide reads, in one-letter code: MTILNHTLGFPRVGLRRELKKAQESYWAGNSTREELLAVGRELRARHWDQQKQAGIDLLPVGDFAWYDHVLTTSLLLGNVPARHQNKDGSVDIDTLFRIGRGRAPTGEPAAAAEMTKWFNTNYHYMVPEFVKGQQFKLTWTQLLEEVDEALALGHKVKPVLLGPVTYLWLGKVKGEQFDRLSLLNDILPVYQQVLAELAKRGIEWVQIDEPALVLELPQAWLDAYKPAYDALQGQVKLLLTTYFEGVTPNLDTITALPVQGLHVDLVHGKDDVAELHKRLPSDWLLSAGLINGRNVWRADLTEKYAQIKDIVGKRDLWVASSCSLLHSPIDLSVETRLDAEVKSWFAFALQKCHELALLRDALNSGDTAALAEWSAPIQARRHSTRVHNPAVEKRLAAITAQDSQRANVYEVRAEAQRARFKLPAWPTTTIGSFPQTTEIRTLRLDFKKGNLDANNYRTGIAEHIKQAIVEQERLGLDVLVHGEAERNDMVEYFGEHLDGFVFTQNGWVQSYGSRCVKPPIVIGDVSRPAPITVEWAKYAQSLTDKPVKGMLTGPVTILCWSFPREDVSRETIAKQIALALRDEVADLEAAGIGIIQIDEPALREGLPLRRSDWDAYLQWGVEAFRINAAVAKDDTQIHTHMCYCEFNDIMDSIAALDADVITIETSRSDMELLESFEEFDYPNEIGPGVYDIHSPNVPSVEWIEALLKKAAKRIPAERLWVNPDCGLKTRGWPETRAALANMVQAAQNLRRG.

Residues 17-20 (RELK) and lysine 117 each bind 5-methyltetrahydropteroyltri-L-glutamate. L-homocysteine-binding positions include 431–433 (IGS) and glutamate 484. Residues 431 to 433 (IGS) and glutamate 484 contribute to the L-methionine site. Residues 515–516 (RC) and tryptophan 561 contribute to the 5-methyltetrahydropteroyltri-L-glutamate site. Residue aspartate 599 coordinates L-homocysteine. Aspartate 599 lines the L-methionine pocket. Glutamate 605 is a 5-methyltetrahydropteroyltri-L-glutamate binding site. Histidine 641, cysteine 643, and glutamate 665 together coordinate Zn(2+). Histidine 694 serves as the catalytic Proton donor. Cysteine 726 contacts Zn(2+).

The protein belongs to the vitamin-B12 independent methionine synthase family. Zn(2+) is required as a cofactor.

The catalysed reaction is 5-methyltetrahydropteroyltri-L-glutamate + L-homocysteine = tetrahydropteroyltri-L-glutamate + L-methionine. It participates in amino-acid biosynthesis; L-methionine biosynthesis via de novo pathway; L-methionine from L-homocysteine (MetE route): step 1/1. In terms of biological role, catalyzes the transfer of a methyl group from 5-methyltetrahydrofolate to homocysteine resulting in methionine formation. This chain is 5-methyltetrahydropteroyltriglutamate--homocysteine methyltransferase, found in Escherichia fergusonii (strain ATCC 35469 / DSM 13698 / CCUG 18766 / IAM 14443 / JCM 21226 / LMG 7866 / NBRC 102419 / NCTC 12128 / CDC 0568-73).